A 138-amino-acid polypeptide reads, in one-letter code: Larval cuticle protein 1 (138 aa).

Residues 1 to 16 (MFKFVMVFAVLGVAAA) form the signal peptide. One can recognise a Chitin-binding type R&amp;R domain in the interval 49–110 (ADGFDADLLV…PVGAVLPTPP (62 aa)).

Component of the larval cuticle. The chain is Larval cuticle protein 1 (Lcp1) from Drosophila miranda (Fruit fly).